The chain runs to 347 residues: NADH-ubiquinone oxidoreductase chain 2 (347 aa).

11 helical membrane passes run M1–L21, H25–M45, Y59–M79, L96–P116, V122–M142, I145–G165, I178–P198, L200–M220, V242–P262, N274–M294, and L325–L345.

It belongs to the complex I subunit 2 family. Core subunit of respiratory chain NADH dehydrogenase (Complex I) which is composed of 45 different subunits. Interacts with TMEM242.

The protein localises to the mitochondrion inner membrane. It catalyses the reaction a ubiquinone + NADH + 5 H(+)(in) = a ubiquinol + NAD(+) + 4 H(+)(out). Functionally, core subunit of the mitochondrial membrane respiratory chain NADH dehydrogenase (Complex I) which catalyzes electron transfer from NADH through the respiratory chain, using ubiquinone as an electron acceptor. Essential for the catalytic activity and assembly of complex I. The polypeptide is NADH-ubiquinone oxidoreductase chain 2 (Myosorex kihaulei (Kihaule's mouse shrew)).